The sequence spans 768 residues: Ribosomal RNA large subunit methyltransferase K/L (768 aa).

The 116-residue stretch at 60–175 (DLYKICLWSR…DKQAELYLDL (116 aa)) folds into the THUMP domain.

Belongs to the methyltransferase superfamily. RlmKL family.

It is found in the cytoplasm. It carries out the reaction guanosine(2445) in 23S rRNA + S-adenosyl-L-methionine = N(2)-methylguanosine(2445) in 23S rRNA + S-adenosyl-L-homocysteine + H(+). It catalyses the reaction guanosine(2069) in 23S rRNA + S-adenosyl-L-methionine = N(2)-methylguanosine(2069) in 23S rRNA + S-adenosyl-L-homocysteine + H(+). In terms of biological role, specifically methylates the guanine in position 2445 (m2G2445) and the guanine in position 2069 (m7G2069) of 23S rRNA. The polypeptide is Ribosomal RNA large subunit methyltransferase K/L (Psychrobacter arcticus (strain DSM 17307 / VKM B-2377 / 273-4)).